We begin with the raw amino-acid sequence, 60 residues long: Large ribosomal subunit protein eL37 (60 aa).

Residues Cys18, Cys21, Cys33, and Cys36 each coordinate Zn(2+). Residues 18–36 (CRRCGKNSYHVRKKVCAAC) form a C4-type zinc finger.

It belongs to the eukaryotic ribosomal protein eL37 family. Zn(2+) is required as a cofactor.

In terms of biological role, binds to the 23S rRNA. In Methanothermobacter thermautotrophicus (strain ATCC 29096 / DSM 1053 / JCM 10044 / NBRC 100330 / Delta H) (Methanobacterium thermoautotrophicum), this protein is Large ribosomal subunit protein eL37 (rpl37e).